Here is a 540-residue protein sequence, read N- to C-terminus: ADP,ATP carrier protein 2 (540 aa).

12 consecutive transmembrane segments (helical) span residues F23 to L43, V61 to Y81, V93 to Y113, L150 to V170, A185 to L205, E222 to Y242, L292 to V312, I334 to I354, I361 to I381, M389 to V409, S455 to L475, and A477 to G497.

This sequence belongs to the ADP/ATP translocase tlc family.

The protein resides in the cell membrane. The polypeptide is ADP,ATP carrier protein 2 (tlcB) (Chlamydia trachomatis serovar D (strain ATCC VR-885 / DSM 19411 / UW-3/Cx)).